The chain runs to 95 residues: Large ribosomal subunit protein bL25 (95 aa).

It belongs to the bacterial ribosomal protein bL25 family. As to quaternary structure, part of the 50S ribosomal subunit; part of the 5S rRNA/L5/L18/L25 subcomplex. Contacts the 5S rRNA. Binds to the 5S rRNA independently of L5 and L18.

This is one of the proteins that binds to the 5S RNA in the ribosome where it forms part of the central protuberance. This Shewanella pealeana (strain ATCC 700345 / ANG-SQ1) protein is Large ribosomal subunit protein bL25.